We begin with the raw amino-acid sequence, 474 residues long: tRNA-2-methylthio-N(6)-dimethylallyladenosine synthase (474 aa).

The MTTase N-terminal domain maps to 3 to 120 (KKLHIKTWGC…LPEMINHVQG (118 aa)). The [4Fe-4S] cluster site is built by cysteine 12, cysteine 49, cysteine 83, cysteine 157, cysteine 161, and cysteine 164. Positions 143-375 (RAEGPTAFVS…QQRISQQAME (233 aa)) constitute a Radical SAM core domain. The 64-residue stretch at 378–441 (RKMVGTVQRV…ASSLRGILLR (64 aa)) folds into the TRAM domain.

It belongs to the methylthiotransferase family. MiaB subfamily. As to quaternary structure, monomer. The cofactor is [4Fe-4S] cluster.

The protein resides in the cytoplasm. The catalysed reaction is N(6)-dimethylallyladenosine(37) in tRNA + (sulfur carrier)-SH + AH2 + 2 S-adenosyl-L-methionine = 2-methylsulfanyl-N(6)-dimethylallyladenosine(37) in tRNA + (sulfur carrier)-H + 5'-deoxyadenosine + L-methionine + A + S-adenosyl-L-homocysteine + 2 H(+). Catalyzes the methylthiolation of N6-(dimethylallyl)adenosine (i(6)A), leading to the formation of 2-methylthio-N6-(dimethylallyl)adenosine (ms(2)i(6)A) at position 37 in tRNAs that read codons beginning with uridine. This is tRNA-2-methylthio-N(6)-dimethylallyladenosine synthase from Yersinia pestis bv. Antiqua (strain Antiqua).